The primary structure comprises 151 residues: Ribonuclease H (151 aa).

An RNase H type-1 domain is found at 5–146 (ALPHVTIFTD…ADQLAREGVA (142 aa)). Mg(2+)-binding residues include D14, E52, D74, and D138.

The protein belongs to the RNase H family. Monomer. Mg(2+) is required as a cofactor.

Its subcellular location is the cytoplasm. It catalyses the reaction Endonucleolytic cleavage to 5'-phosphomonoester.. Functionally, endonuclease that specifically degrades the RNA of RNA-DNA hybrids. This chain is Ribonuclease H, found in Nitrobacter hamburgensis (strain DSM 10229 / NCIMB 13809 / X14).